The primary structure comprises 702 residues: Ferrioxamine B receptor (702 aa).

A signal peptide spans 1 to 30 (MPLEMFMFATTRMALLIGGAIGGATFPLFA). Residues 55-168 (PDIETPQSVS…PGGIVALTSR (114 aa)) enclose the TBDR plug domain. One can recognise a TBDR beta-barrel domain in the interval 173–702 (DAGGEVKLFA…SIVGSVSWAF (530 aa)).

The protein belongs to the TonB-dependent receptor family.

The protein resides in the cell outer membrane. Its function is as follows. Ferrioxamine binding and uptake, in association with the TonB protein. May play a role in intestinal colonization. In Salmonella typhimurium (strain SL1344), this protein is Ferrioxamine B receptor (foxA).